Reading from the N-terminus, the 392-residue chain is UDP-N-acetylglucosamine--N-acetylmuramyl-(pentapeptide) pyrophosphoryl-undecaprenol N-acetylglucosamine transferase (392 aa).

Residues Thr-14–Gly-16, Asn-124, Arg-167, Ser-195, Ile-251, and Gln-296 each bind UDP-N-acetyl-alpha-D-glucosamine.

The protein belongs to the glycosyltransferase 28 family. MurG subfamily.

The protein localises to the cell inner membrane. It catalyses the reaction di-trans,octa-cis-undecaprenyl diphospho-N-acetyl-alpha-D-muramoyl-L-alanyl-D-glutamyl-meso-2,6-diaminopimeloyl-D-alanyl-D-alanine + UDP-N-acetyl-alpha-D-glucosamine = di-trans,octa-cis-undecaprenyl diphospho-[N-acetyl-alpha-D-glucosaminyl-(1-&gt;4)]-N-acetyl-alpha-D-muramoyl-L-alanyl-D-glutamyl-meso-2,6-diaminopimeloyl-D-alanyl-D-alanine + UDP + H(+). It functions in the pathway cell wall biogenesis; peptidoglycan biosynthesis. In terms of biological role, cell wall formation. Catalyzes the transfer of a GlcNAc subunit on undecaprenyl-pyrophosphoryl-MurNAc-pentapeptide (lipid intermediate I) to form undecaprenyl-pyrophosphoryl-MurNAc-(pentapeptide)GlcNAc (lipid intermediate II). This is UDP-N-acetylglucosamine--N-acetylmuramyl-(pentapeptide) pyrophosphoryl-undecaprenol N-acetylglucosamine transferase from Sphingopyxis alaskensis (strain DSM 13593 / LMG 18877 / RB2256) (Sphingomonas alaskensis).